The following is a 367-amino-acid chain: Probable cysteine protease RD19D (367 aa).

An N-terminal signal peptide occupies residues 1 to 22 (MVAKALAQLITCIILFCHVVAS). A propeptide spans 23 to 136 (VEDLTIRQVT…AEAPMVEVDG (114 aa)) (activation peptide). The N-linked (GlcNAc...) asparagine glycan is linked to Asn-61. Intrachain disulfides connect Cys-158/Cys-208 and Cys-192/Cys-241. The active site involves Cys-161. The N-linked (GlcNAc...) asparagine glycan is linked to Asn-254. Cys-297 and Cys-352 are disulfide-bonded. Residues His-304 and Asn-331 contribute to the active site.

It belongs to the peptidase C1 family.

In terms of biological role, probable thiol protease. The chain is Probable cysteine protease RD19D from Arabidopsis thaliana (Mouse-ear cress).